The sequence spans 325 residues: Hydroxymethylglutaryl-CoA lyase, mitochondrial (325 aa).

Residues 1–27 (MAAMRKALPRRLVGLASLRAVSTSSMG) constitute a mitochondrion transit peptide. The Pyruvate carboxyltransferase domain maps to 33 to 300 (VKIVEVGPRD…HTGVNLQKLL (268 aa)). Arg41 contributes to the substrate binding site. Asp42 contacts a divalent metal cation. Residue Lys48 is modified to N6-acetyllysine; alternate. At Lys48 the chain carries N6-succinyllysine; alternate. Position 111 is an N6-acetyllysine (Lys111). 2 positions are modified to N6-acetyllysine; alternate: Lys137 and Lys179. N6-succinyllysine; alternate is present on residues Lys137 and Lys179. A divalent metal cation is bound by residues His233 and His235. Residue Cys266 is part of the active site. Asn275 serves as a coordination point for a divalent metal cation. A Microbody targeting signal motif is present at residues 323-325 (CKL). Residue Lys324 is modified to N6-acetyllysine.

This sequence belongs to the HMG-CoA lyase family. In terms of assembly, homodimer; disulfide-linked. Can also form homotetramers. A divalent metal cation is required as a cofactor. As to expression, highest expression in liver. Expressed in pancreas, kidney, intestine, testis, fibroblasts and lymphoblasts. Very low expression in brain and skeletal muscle. The relative expression of isoform 2 (at mRNA level) is highest in heart (30%), skeletal muscle (22%), and brain (14%).

The protein resides in the mitochondrion matrix. It is found in the peroxisome. It carries out the reaction (3S)-3-hydroxy-3-methylglutaryl-CoA = acetoacetate + acetyl-CoA. It participates in metabolic intermediate metabolism; (S)-3-hydroxy-3-methylglutaryl-CoA degradation; acetoacetate from (S)-3-hydroxy-3-methylglutaryl-CoA: step 1/1. Its activity is regulated as follows. Stimulated by reducing agents such as dithiothreitol (DTT). In terms of biological role, mitochondrial 3-hydroxy-3-methylglutaryl-CoA lyase that catalyzes a cation-dependent cleavage of (S)-3-hydroxy-3-methylglutaryl-CoA into acetyl-CoA and acetoacetate, a key step in ketogenesis. Terminal step in leucine catabolism. Ketone bodies (beta-hydroxybutyrate, acetoacetate and acetone) are essential as an alternative source of energy to glucose, as lipid precursors and as regulators of metabolism. The polypeptide is Hydroxymethylglutaryl-CoA lyase, mitochondrial (HMGCL) (Homo sapiens (Human)).